The primary structure comprises 327 residues: CREB homolog crh-1 (327 aa).

Residues serine 16–valine 75 enclose the KID domain. Disordered stretches follow at residues glutamine 27–glycine 114 and lysine 151–leucine 200. A compositionally biased stretch (basic and acidic residues) spans glutamate 35–asparagine 44. Position 48 is a phosphoserine (serine 48). The segment covering isoleucine 52–glutamate 68 has biased composition (basic and acidic residues). A compositionally biased stretch (polar residues) spans proline 71–serine 84. Over residues glycine 161 to proline 172 the composition is skewed to gly residues. The span at glycine 173–serine 199 shows a compositional bias: low complexity. The bZIP domain occupies asparagine 266–glutamate 317. The tract at residues arginine 267 to lysine 292 is basic motif. Residues arginine 284–leucine 318 adopt a coiled-coil conformation. The interval leucine 294–leucine 315 is leucine-zipper.

Belongs to the bZIP family. Interacts with CREB-regulated transcription coactivator homolog crtc-1. Post-translationally, transcriptional activity is enhanced by phosphorylation. Phosphorylated by cmk-1. Expressed widely, including in head neurons AFD, gustatory neurons ASE, the olfactory neurons AWC, and in the ASI sensory neurons, as well as in the intestine and gonads in hermaphrodites.

The protein resides in the nucleus. Transcription factor. Transcriptional activity probably positively regulated by phosphorylation. Modulates expression of target genes, acting by binding to regulatory cAMP response elements (CRE). Acts downstream of the calcium-triggered CaMKK-CaMK1 signaling cascade, consisting of the protein kinase kinase ckk-1 and the protein kinase cmk-1. Plays a role in learning and memory, feeding behavior, stress response, entry into the dauer stage and modulation of lifespan. Involved in commitment to the developmentally arrested larval state known as dauer, acting by positively regulating the expression of dauer-inhibiting TGF-beta-like daf-7 in the ASI neurons. Plays a role in both associative and non-associative long-term memory (LTM). Involved in modulating feeding behavior, acting by regulating transcription of tryptophan hydroxylase tph-1 in serotonergic ADF neurons. Regulates transcription of genes involved in endoplasmic reticulum (ER) stress. Involved in modulation of lifespan, in response to raised temperature, but independently of the heat-shock response pathway, acting by regulating transcription of FMRFamide-like neuropeptides flp-6 in the AFD neuron. Its function is as follows. Plays a role in associative long-term memory (LTM) and learning. Functionally, plays a role in associative long-term memory (LTM) and learning; perhaps required at the time of acquisition and/or the consolidation phase of memory formation. This is CREB homolog crh-1 from Caenorhabditis elegans.